The chain runs to 151 residues: Large-conductance mechanosensitive channel (151 aa).

A run of 2 helical transmembrane segments spans residues 14 to 34 (VVDM…VNSL) and 85 to 105 (GLFV…FLLV).

This sequence belongs to the MscL family. As to quaternary structure, homopentamer.

The protein localises to the cell inner membrane. Channel that opens in response to stretch forces in the membrane lipid bilayer. May participate in the regulation of osmotic pressure changes within the cell. The chain is Large-conductance mechanosensitive channel from Chlorobaculum tepidum (strain ATCC 49652 / DSM 12025 / NBRC 103806 / TLS) (Chlorobium tepidum).